The chain runs to 701 residues: Centrosomal protein of 83 kDa (701 aa).

Over residues 1 to 14 (MVVSTFTDMDTFPN) the composition is skewed to polar residues. Positions 1 to 23 (MVVSTFTDMDTFPNNFPPGGDSG) are disordered. Coiled coils occupy residues 40–634 (LRCE…SLIL) and 665–698 (HMQEEQHQRELSLLRKRLEELETTQRKQLEELGS). Serine 698 bears the Phosphoserine mark.

This sequence belongs to the CEP83 family. Interacts with CEP164 and IFT20.

The protein resides in the cytoplasm. It localises to the cytoskeleton. The protein localises to the microtubule organizing center. It is found in the centrosome. Its subcellular location is the centriole. Its function is as follows. Component of the distal appendage region of the centriole involved in the initiation of primary cilium assembly. May collaborate with IFT20 in the trafficking of ciliary membrane proteins from the Golgi complex to the cilium during the initiation of primary cilium assembly. This is Centrosomal protein of 83 kDa (CEP83) from Homo sapiens (Human).